We begin with the raw amino-acid sequence, 312 residues long: HTH-type transcriptional regulator PtxR (312 aa).

The 58-residue stretch at 11 to 68 (LNLNHLYAFVAVAEHNSFTAAAEALGLSKSLLSEQLRRLEADLGIQLLTRTTRRMTLT) folds into the HTH lysR-type domain. The H-T-H motif DNA-binding region spans 28–47 (FTAAAEALGLSKSLLSEQLR).

This sequence belongs to the LysR transcriptional regulatory family. In terms of assembly, monomer in solution. May dimerize on binding to DNA. Interacts with PtxS in the absence of 2-ketogluconate. Binding of the 2-ketogluconate effector to PtxS causes PtxS/PtxR complex dissociation.

With respect to regulation, negatively regulated by PtxS, which interacts with PtxR and prevents its activity. In terms of biological role, plays an important role in the regulation of the production of the virulence factor exotoxin A (toxA), via positive regulation of the transcription of the toxA gene. Acts by binding directly to the toxA promoter region. Besides toxA, PtxR modulates the expression of genes that code for the QS-controlled virulence factors. It negatively regulates the expression of the rhamnolipid and pyocyanine genes, through the autoinducer synthase RhlI, and the PQS synthesis operon pqsABCDE, while it positively regulates the expression of lasB through the autoinducer synthase LasI. Also positively regulates the expression of the exotoxin A regulatory protein (toxR or regA). In addition, is involved in the positive regulation of glucose metabolism via the regulation of the expression of the kgu and gad operons. Acts by binding directly to the promoter region of the kgu and gad operons. In Pseudomonas aeruginosa (strain ATCC 15692 / DSM 22644 / CIP 104116 / JCM 14847 / LMG 12228 / 1C / PRS 101 / PAO1), this protein is HTH-type transcriptional regulator PtxR.